The following is a 360-amino-acid chain: Phosphoserine aminotransferase (360 aa).

L-glutamate is bound at residue arginine 42. The pyridoxal 5'-phosphate site is built by tryptophan 102, threonine 152, aspartate 171, and glutamine 194. Residue lysine 195 is modified to N6-(pyridoxal phosphate)lysine. 237 to 238 provides a ligand contact to pyridoxal 5'-phosphate; it reads NT.

It belongs to the class-V pyridoxal-phosphate-dependent aminotransferase family. SerC subfamily. Homodimer. Pyridoxal 5'-phosphate is required as a cofactor.

It localises to the cytoplasm. The enzyme catalyses O-phospho-L-serine + 2-oxoglutarate = 3-phosphooxypyruvate + L-glutamate. The catalysed reaction is 4-(phosphooxy)-L-threonine + 2-oxoglutarate = (R)-3-hydroxy-2-oxo-4-phosphooxybutanoate + L-glutamate. It functions in the pathway amino-acid biosynthesis; L-serine biosynthesis; L-serine from 3-phospho-D-glycerate: step 2/3. It participates in cofactor biosynthesis; pyridoxine 5'-phosphate biosynthesis; pyridoxine 5'-phosphate from D-erythrose 4-phosphate: step 3/5. Its function is as follows. Catalyzes the reversible conversion of 3-phosphohydroxypyruvate to phosphoserine and of 3-hydroxy-2-oxo-4-phosphonooxybutanoate to phosphohydroxythreonine. The protein is Phosphoserine aminotransferase of Coxiella burnetii (strain CbuG_Q212) (Coxiella burnetii (strain Q212)).